Consider the following 810-residue polypeptide: Nuclear pore complex protein NUP88 (810 aa).

The disordered stretch occupies residues 1–23; that stretch reads MKFNFNETEDAPDSRRSPTPKEP. The stretch at 646–748 forms a coiled coil; sequence APNLKRIIDD…RARVKKSTQK (103 aa).

In terms of assembly, part of the nuclear pore complex (NPC). The NPC has an eight-fold symmetrical structure comprising a central transport channel and two rings, the cytoplasmic and nuclear rings, to which eight filaments are attached. The cytoplasmic filaments have loose ends, while the nuclear filaments are joined in a distal ring, forming a nuclear basket. NPCs are highly dynamic in configuration and composition, and can be devided in 3 subcomplexes, the NUP62 subcomplex, the NUP107-160 subcomplex and the NUP93 subcomplex, containing approximately 30 different nucleoporin proteins.

Its subcellular location is the nucleus envelope. The protein resides in the nucleus. It is found in the nuclear pore complex. Involved in the regulation of exportin-mediated nuclear protein export. Required for resistance mediated by multiple R proteins and for the appropriate nuclear accumulation of SNC1 and of the downstream defense signaling components EDS1 and NPR1. Not involved in salt tolerance, ethylene and auxin responses, but required for systemic acquired resistance. This is Nuclear pore complex protein NUP88 from Arabidopsis thaliana (Mouse-ear cress).